A 321-amino-acid chain; its full sequence is PI-PLC X domain-containing protein 3 (321 aa).

The region spanning 22–197 is the PI-PLC X-box domain; the sequence is SIHSIPLTNL…DYQVLVFYHS (176 aa). Residues His-37 and His-114 contribute to the active site.

Widely expressed, with highest levels in brain, followed by heart atrium. Not detected in small intestine, nor stomach.

Its subcellular location is the cytoplasm. In Mus musculus (Mouse), this protein is PI-PLC X domain-containing protein 3 (Plcxd3).